Here is a 735-residue protein sequence, read N- to C-terminus: Translation initiation factor IF-2, chloroplastic (735 aa).

The 173-residue stretch at 239-411 folds into the tr-type G domain; it reads RRAPIVTILG…ILLMADIENY (173 aa). The G1 stretch occupies residues 248-255; the sequence is GHVDHGKT. A GTP-binding site is contributed by 248 to 255; it reads GHVDHGKT. The segment at 273–277 is G2; the sequence is GITQK. A G3 region spans residues 298 to 301; that stretch reads DTPG. GTP contacts are provided by residues 298–302 and 352–355; these read DTPGH and NKID. Residues 352–355 form a G4 region; that stretch reads NKID. The segment at 388–390 is G5; it reads SAS.

It belongs to the TRAFAC class translation factor GTPase superfamily. Classic translation factor GTPase family. IF-2 subfamily.

The protein resides in the plastid. The protein localises to the chloroplast. Its function is as follows. One of the essential components for the initiation of protein synthesis. Protects formylmethionyl-tRNA from spontaneous hydrolysis and promotes its binding to the 30S ribosomal subunits. Also involved in the hydrolysis of GTP during the formation of the 70S ribosomal complex. The protein is Translation initiation factor IF-2, chloroplastic (infB) of Guillardia theta (Cryptophyte).